Reading from the N-terminus, the 228-residue chain is UPF0173 metal-dependent hydrolase BcerKBAB4_4442 (228 aa).

Belongs to the UPF0173 family.

This chain is UPF0173 metal-dependent hydrolase BcerKBAB4_4442, found in Bacillus mycoides (strain KBAB4) (Bacillus weihenstephanensis).